A 301-amino-acid chain; its full sequence is Probable actin-related protein 2/3 complex subunit 2 (301 aa).

This sequence belongs to the ARPC2 family. As to quaternary structure, component of the Arp2/3 complex, at least composed of arx-1, arx-2, arx-4 and arx-6.

It is found in the cytoplasm. It localises to the cytoskeleton. Its function is as follows. Functions as actin-binding component of the Arp2/3 complex which is involved in regulation of actin polymerization and together with an activating nucleation-promoting factor (NPF) mediates the formation of branched actin networks. Seems to contact the mother actin filament. Plays a role in time-dependent memory loss and the retention of conditioned behavior over time. This Caenorhabditis elegans protein is Probable actin-related protein 2/3 complex subunit 2.